We begin with the raw amino-acid sequence, 262 residues long: Cytochrome c oxidase subunit 2 (262 aa).

2 consecutive transmembrane segments (helical) span residues 31 to 51 and 72 to 92; these read HIMF…YVII and IIWT…SFIL. Positions 175, 210, 212, 214, 218, and 221 each coordinate Cu cation. A Mg(2+)-binding site is contributed by Glu-212.

The protein belongs to the cytochrome c oxidase subunit 2 family. In terms of assembly, component of the cytochrome c oxidase (complex IV, CIV), a multisubunit enzyme composed of a catalytic core of 3 subunits and several supernumerary subunits. The complex exists as a monomer or a dimer and forms supercomplexes (SCs) in the inner mitochondrial membrane with ubiquinol-cytochrome c oxidoreductase (cytochrome b-c1 complex, complex III, CIII). Cu cation is required as a cofactor.

It is found in the mitochondrion inner membrane. The enzyme catalyses 4 Fe(II)-[cytochrome c] + O2 + 8 H(+)(in) = 4 Fe(III)-[cytochrome c] + 2 H2O + 4 H(+)(out). Functionally, component of the cytochrome c oxidase, the last enzyme in the mitochondrial electron transport chain which drives oxidative phosphorylation. The respiratory chain contains 3 multisubunit complexes succinate dehydrogenase (complex II, CII), ubiquinol-cytochrome c oxidoreductase (cytochrome b-c1 complex, complex III, CIII) and cytochrome c oxidase (complex IV, CIV), that cooperate to transfer electrons derived from NADH and succinate to molecular oxygen, creating an electrochemical gradient over the inner membrane that drives transmembrane transport and the ATP synthase. Cytochrome c oxidase is the component of the respiratory chain that catalyzes the reduction of oxygen to water. Electrons originating from reduced cytochrome c in the intermembrane space (IMS) are transferred via the dinuclear copper A center (CU(A)) of subunit 2 and heme A of subunit 1 to the active site in subunit 1, a binuclear center (BNC) formed by heme A3 and copper B (CU(B)). The BNC reduces molecular oxygen to 2 water molecules using 4 electrons from cytochrome c in the IMS and 4 protons from the mitochondrial matrix. This Candida albicans (strain SC5314 / ATCC MYA-2876) (Yeast) protein is Cytochrome c oxidase subunit 2 (COX2).